Here is a 796-residue protein sequence, read N- to C-terminus: Phenylalanine--tRNA ligase beta subunit (796 aa).

The tRNA-binding domain occupies 39–149 (SAALKSFRVA…GDAPLGTTFA (111 aa)). Residues 398–470 (LARKALAYDP…RVHGLDAVPS (73 aa)) enclose the B5 domain. Residues aspartate 448, aspartate 454, glutamate 457, and glutamate 458 each coordinate Mg(2+). The FDX-ACB domain occupies 703 to 795 (PALQAVTRDF…AAGKLGAELR (93 aa)).

The protein belongs to the phenylalanyl-tRNA synthetase beta subunit family. Type 1 subfamily. Tetramer of two alpha and two beta subunits. The cofactor is Mg(2+).

The protein localises to the cytoplasm. It catalyses the reaction tRNA(Phe) + L-phenylalanine + ATP = L-phenylalanyl-tRNA(Phe) + AMP + diphosphate + H(+). In Novosphingobium aromaticivorans (strain ATCC 700278 / DSM 12444 / CCUG 56034 / CIP 105152 / NBRC 16084 / F199), this protein is Phenylalanine--tRNA ligase beta subunit.